The sequence spans 427 residues: Trigger factor (427 aa).

Positions 163–248 constitute a PPIase FKBP-type domain; that stretch reads GDTVVIDFVG…IHEVKTKEVP (86 aa).

It belongs to the FKBP-type PPIase family. Tig subfamily.

The protein resides in the cytoplasm. The catalysed reaction is [protein]-peptidylproline (omega=180) = [protein]-peptidylproline (omega=0). In terms of biological role, involved in protein export. Acts as a chaperone by maintaining the newly synthesized protein in an open conformation. Functions as a peptidyl-prolyl cis-trans isomerase. The sequence is that of Trigger factor from Streptococcus pyogenes serotype M18 (strain MGAS8232).